Here is an 832-residue protein sequence, read N- to C-terminus: Cytosolic carboxypeptidase-like protein 5 (832 aa).

Positions 27 to 50 are disordered; it reads TVPSDGEGVGGAATAPTSGSASSP. A compositionally biased stretch (low complexity) spans 38–50; the sequence is AATAPTSGSASSP. In terms of domain architecture, Peptidase M14 spans 157–571; the sequence is YPFSYSDCQD…ALAIAALDMA (415 aa). Residues His252 and Glu255 each contribute to the Zn(2+) site. Residues 343–354 show a composition bias toward low complexity; that stretch reads NSKNPSNQQPSS. Disordered regions lie at residues 343–362 and 376–402; these read NSKNPSNQQPSSLHLPPEVP and LHLGQSPDGENHDRWTETEPTEEKTDP. The span at 384–401 shows a compositional bias: basic and acidic residues; the sequence is GENHDRWTETEPTEEKTD. His435 is a binding site for Zn(2+). The Proton donor/acceptor role is filled by Glu517. The disordered stretch occupies residues 606-752; sequence STANVGLNKK…ASPTSSRNMG (147 aa). Residues 621-636 show a composition bias toward polar residues; the sequence is PPKSNNGLPVSCSENA. Residues 644-654 show a composition bias toward low complexity; that stretch reads STGTSTGGSSS. A compositionally biased stretch (polar residues) spans 655–666; that stretch reads QQNSPQMKNSPS. Low complexity predominate over residues 708-752; that stretch reads QQQQQQQQQQQQQQQQPLNQRSTTSSLAPSPTLASASPTSSRNMG.

The protein belongs to the peptidase M14 family. Zn(2+) is required as a cofactor.

The protein resides in the cytoplasm. Its subcellular location is the cytosol. It is found in the nucleus. It localises to the cytoskeleton. The protein localises to the spindle. The protein resides in the midbody. The enzyme catalyses gamma-L-glutamyl-L-glutamyl-[protein] + H2O = L-glutamyl-[protein] + L-glutamate. It catalyses the reaction (L-glutamyl)(n+1)-gamma-L-glutamyl-L-glutamyl-[protein] + H2O = (L-glutamyl)(n)-gamma-L-glutamyl-L-glutamyl-[protein] + L-glutamate. It carries out the reaction C-terminal L-alpha-aminoacyl-L-glutamyl-[tubulin] + H2O = C-terminal L-alpha-aminoacyl-[tubulin] + L-glutamate. The catalysed reaction is C-terminal L-alpha-aminoacyl-L-glutamyl-L-glutamyl-[tubulin] + H2O = C-terminal L-alpha-aminoacyl-L-glutamyl-[tubulin] + L-glutamate. In terms of biological role, metallocarboxypeptidase that mediates deglutamylation of tubulin and non-tubulin target proteins. Catalyzes the removal of polyglutamate side chains present on the gamma-carboxyl group of glutamate residues within the C-terminal tail of alpha- and beta-tubulin. Cleaves alpha- and gamma-linked polyglutamate tubulin side-chain, as well as the branching point glutamate. Also catalyzes the removal of alpha-linked glutamate residues from the carboxy-terminus of alpha-tubulin. Mediates deglutamylation of nucleotidyltransferase CGAS, leading to CGAS antiviral defense response activation. This is Cytosolic carboxypeptidase-like protein 5 (Agbl5) from Rattus norvegicus (Rat).